A 199-amino-acid chain; its full sequence is MATLIFVDKDNEEPGSRLASKDGLKLGSGVKALDGKLQVSTPRVGKVFGAPGLPKASRKALGTVNRVTEKPVKSSKPLQSKQPTLSVKKITEKSTKTQGSAPAPDDAYPEIEKFFPFDPLDFESFDLPEEHQISLLPLNGVPLMILNEERGLEKLLHLDPPSPLQKPFLPWESDPLPSPPSALSALDVELPPVCYDADI.

2 disordered regions span residues 1–23 (MATL…SKDG) and 58–108 (RKAL…DDAY). Position 2 is an N-acetylalanine (Ala-2). Positions 7–23 (VDKDNEEPGSRLASKDG) are enriched in basic and acidic residues. Residues 58 to 61 (RKAL) carry the D-box motif. The TEK-box 1 signature appears at 68–70 (TEK). Over residues 76-85 (KPLQSKQPTL) the composition is skewed to polar residues. The TEK-box 2 signature appears at 91-93 (TEK). Ser-162 carries the post-translational modification Phosphoserine. An SH3-binding motif is present at residues 179 to 192 (PPSALSALDVELPP).

Belongs to the securin family. Interacts with the caspase-like ESPL1, and prevents its protease activity by covering its active site. Interacts with p53/TP53 and blocks its activity probably by blocking its binding to DNA. Interacts with the Ku 70 kDa subunit of ds-DNA kinase. Interacts with PTTG1IP. Interacts with RPS10 and DNAJA1. Post-translationally, phosphorylated at Ser-162 by CDK1 during mitosis. Phosphorylated in vitro by ds-DNA kinase. In terms of processing, ubiquitinated through 'Lys-11' linkage of ubiquitin moieties by the anaphase promoting complex (APC) at the onset of anaphase, conducting to its degradation. 'Lys-11'-linked ubiquitination is mediated by the E2 ligase UBE2C/UBCH10. In terms of tissue distribution, expressed at low level in most tissues, except in adult testis, where it is highly expressed. Expressed in both spermatocytes and spermatids.

The protein localises to the cytoplasm. Its subcellular location is the nucleus. Regulatory protein, which plays a central role in chromosome stability, in the p53/TP53 pathway, and DNA repair. Probably acts by blocking the action of key proteins. During the mitosis, it blocks Separase/ESPL1 function, preventing the proteolysis of the cohesin complex and the subsequent segregation of the chromosomes. At the onset of anaphase, it is ubiquitinated, conducting to its destruction and to the liberation of ESPL1. Its function is however not limited to a blocking activity, since it is required to activate ESPL1. Negatively regulates the transcriptional activity and related apoptosis activity of p53/TP53. The negative regulation of p53/TP53 may explain the strong transforming capability of the protein when it is overexpressed. May also play a role in DNA repair via its interaction with Ku, possibly by connecting DNA damage-response pathways with sister chromatid separation. This is Securin (Pttg1) from Rattus norvegicus (Rat).